The chain runs to 378 residues: Conserved oligomeric Golgi complex subunit 8 (378 aa).

It belongs to the COG8 family. In terms of assembly, component of the conserved oligomeric Golgi complex which is composed of eight different subunits and is required for normal Golgi morphology and localization.

It is found in the golgi apparatus membrane. In terms of biological role, required for normal Golgi function. This is Conserved oligomeric Golgi complex subunit 8 (cog8) from Schizosaccharomyces pombe (strain 972 / ATCC 24843) (Fission yeast).